Here is a 430-residue protein sequence, read N- to C-terminus: Serine--tRNA ligase (430 aa).

The segment at Q41 to K60 is disordered. T236–E238 lines the L-serine pocket. Residue R267–E269 participates in ATP binding. Residue E290 coordinates L-serine. E354–S357 contacts ATP. S390 is a binding site for L-serine.

Belongs to the class-II aminoacyl-tRNA synthetase family. Type-1 seryl-tRNA synthetase subfamily. Homodimer. The tRNA molecule binds across the dimer.

Its subcellular location is the cytoplasm. It carries out the reaction tRNA(Ser) + L-serine + ATP = L-seryl-tRNA(Ser) + AMP + diphosphate + H(+). The catalysed reaction is tRNA(Sec) + L-serine + ATP = L-seryl-tRNA(Sec) + AMP + diphosphate + H(+). It functions in the pathway aminoacyl-tRNA biosynthesis; selenocysteinyl-tRNA(Sec) biosynthesis; L-seryl-tRNA(Sec) from L-serine and tRNA(Sec): step 1/1. Functionally, catalyzes the attachment of serine to tRNA(Ser). Is also able to aminoacylate tRNA(Sec) with serine, to form the misacylated tRNA L-seryl-tRNA(Sec), which will be further converted into selenocysteinyl-tRNA(Sec). The sequence is that of Serine--tRNA ligase from Alteromonas mediterranea (strain DSM 17117 / CIP 110805 / LMG 28347 / Deep ecotype).